A 242-amino-acid polypeptide reads, in one-letter code: ATP synthase subunit b 2 (242 aa).

A helical transmembrane segment spans residues 4 to 24; sequence LLAISSLTLLASLVLLVVSPA. The segment at 43-74 is disordered; that stretch reads ADSEDGDHDHDHEGDDHGHDEAAGDEHGHGDG. A compositionally biased stretch (basic and acidic residues) spans 49–74; it reads DHDHDHEGDDHGHDEAAGDEHGHGDG.

This sequence belongs to the ATPase B chain family. F-type ATPases have 2 components, F(1) - the catalytic core - and F(0) - the membrane proton channel. F(1) has five subunits: alpha(3), beta(3), gamma(1), delta(1), epsilon(1). F(0) has three main subunits: a(1), b(2) and c(10-14). The alpha and beta chains form an alternating ring which encloses part of the gamma chain. F(1) is attached to F(0) by a central stalk formed by the gamma and epsilon chains, while a peripheral stalk is formed by the delta and b chains.

It localises to the cell inner membrane. Functionally, f(1)F(0) ATP synthase produces ATP from ADP in the presence of a proton or sodium gradient. F-type ATPases consist of two structural domains, F(1) containing the extramembraneous catalytic core and F(0) containing the membrane proton channel, linked together by a central stalk and a peripheral stalk. During catalysis, ATP synthesis in the catalytic domain of F(1) is coupled via a rotary mechanism of the central stalk subunits to proton translocation. In terms of biological role, component of the F(0) channel, it forms part of the peripheral stalk, linking F(1) to F(0). The chain is ATP synthase subunit b 2 from Rhodopirellula baltica (strain DSM 10527 / NCIMB 13988 / SH1).